The primary structure comprises 691 residues: MANTYLLEVGVEEMPAHVVTPSIKQLHERVAKYLKEQRITFDDIQEFATPRRMALLIHGLSDKQPDIDESVKGPAKKIAQDADGNWTKAAIGFTRGQGASVEDIEFKEVKGVEYVFVEKHIAGKTVAEVLQGLPAVITSMTFPTLMKWGYNNLQFIRPIRWLVSLLNDEVVPFNILDVEAGRETQGHRFLGHPVEIAKADDYEETLNNDFVIADQTKRKNLIKDQITKIINENNWQVDWDEDLLEEVNNLVEWPTAFAGSFDEKYLALPDPVLITSMKDNQRFFCVRDGDGNLLSHFISVRNGNTDYLDNVIKGNERVLVPRLEDAQFFYQEDQKLTIDEYVERLKKVSFHDKISSMYDKMQRVAVIANVLGKQLNLSDEELADLDRAAHIYKFDLTTQMVGEFAELQGIMGEIYAKLFGEKDDVATAIREHYMPISAEGELPQTKIGAVLAIADKLDSIMSFFAVDMIPSGSNDPYALRRQAFGIVRIIADRGWHLPLLSIQSEIAPAFENAEINVSFDLNKNSDEVRSFFLDRIKQLFHGQKVRHDIIDAATDTRQNDIANILEAIQTIDDHKDDDNFKEDIEALTRVLRIAKKDKRPVSELVVDPNLFENPSEAKMHTAVSELIKENQQTVSENFAALRTLTPIISEYFDENMIMDKNEDIRNNRLAQLSILAHQASLIGNLDNLIVK.

Belongs to the class-II aminoacyl-tRNA synthetase family. As to quaternary structure, tetramer of two alpha and two beta subunits.

Its subcellular location is the cytoplasm. The enzyme catalyses tRNA(Gly) + glycine + ATP = glycyl-tRNA(Gly) + AMP + diphosphate. This is Glycine--tRNA ligase beta subunit from Limosilactobacillus reuteri (strain DSM 20016) (Lactobacillus reuteri).